Reading from the N-terminus, the 525-residue chain is GMP synthase [glutamine-hydrolyzing] (525 aa).

One can recognise a Glutamine amidotransferase type-1 domain in the interval 8-207 (KILILDFGSQ…ALDICGCKAN (200 aa)). The active-site Nucleophile is the C85. Catalysis depends on residues H181 and E183. Residues 208-400 (WKPSSIIEDA…LGLPYNMLYR (193 aa)) enclose the GMPS ATP-PPase domain. 235-241 (SGGVDSS) serves as a coordination point for ATP.

Homodimer.

The catalysed reaction is XMP + L-glutamine + ATP + H2O = GMP + L-glutamate + AMP + diphosphate + 2 H(+). It functions in the pathway purine metabolism; GMP biosynthesis; GMP from XMP (L-Gln route): step 1/1. In terms of biological role, catalyzes the synthesis of GMP from XMP. The sequence is that of GMP synthase [glutamine-hydrolyzing] from Shewanella frigidimarina (strain NCIMB 400).